We begin with the raw amino-acid sequence, 631 residues long: uncharacterized protein (631 aa).

Positions 1–19 are enriched in polar residues; that stretch reads MSKMGSSSMGELQDGITQE. The tract at residues 1–92 is disordered; it reads MSKMGSSSMG…EENYPRLQTT (92 aa). Over residues 67-76 the composition is skewed to basic residues; that stretch reads KKKKKKKLKK. Residues 277–426 form the Exonuclease domain; the sequence is LAIDCEMVRT…EDALACVDLL (150 aa). Residues 517 to 526 are compositionally biased toward polar residues; the sequence is ANRNTKQENN. The tract at residues 517-540 is disordered; sequence ANRNTKQENNSDTDTENDSVEEDQ. The segment covering 527–540 has biased composition (acidic residues); that stretch reads SDTDTENDSVEEDQ.

Belongs to the REXO1/REXO3 family.

It is found in the nucleus. This is an uncharacterized protein from Schizosaccharomyces pombe (strain 972 / ATCC 24843) (Fission yeast).